Here is a 392-residue protein sequence, read N- to C-terminus: Probable protein phosphatase 2C 29 (392 aa).

Residues 44 to 353 enclose the PPM-type phosphatase domain; the sequence is DYSVAVAQAN…DDITVVVLFL (310 aa). Mn(2+) is bound by residues D75, G76, D285, and D344. The disordered stretch occupies residues 360-392; that stretch reads AGRGDEIDGTDGPVDVFSLSPDDREDPTRPVLR.

It belongs to the PP2C family. It depends on Mg(2+) as a cofactor. The cofactor is Mn(2+).

It carries out the reaction O-phospho-L-seryl-[protein] + H2O = L-seryl-[protein] + phosphate. It catalyses the reaction O-phospho-L-threonyl-[protein] + H2O = L-threonyl-[protein] + phosphate. This is Probable protein phosphatase 2C 29 from Oryza sativa subsp. japonica (Rice).